Reading from the N-terminus, the 563-residue chain is Pyruvate decarboxylase isozyme 1 (563 aa).

Ser2 is subject to N-acetylserine. Pyruvate-binding residues include Asp28, His115, and Tyr157. An Omega-N-methylarginine modification is found at Arg161. Lys212 is covalently cross-linked (Glycyl lysine isopeptide (Lys-Gly) (interchain with G-Cter in ubiquitin)). At Ser223 the chain carries Phosphoserine. Arg224 lines the pyruvate pocket. Lys233 is covalently cross-linked (Glycyl lysine isopeptide (Lys-Gly) (interchain with G-Cter in ubiquitin)). Phosphothreonine is present on Thr266. Glycyl lysine isopeptide (Lys-Gly) (interchain with G-Cter in ubiquitin) cross-links involve residues Lys269 and Lys332. Residues Thr336 and Thr353 each carry the phosphothreonine modification. Residues Thr390 and 413-415 (GSI) each bind thiamine diphosphate. Asp444 is a Mg(2+) binding site. Thiamine diphosphate-binding positions include 445–446 (GS) and 471–476 (NDGYTI). Mg(2+)-binding residues include Asn471 and Gly473. Position 477 (Glu477) interacts with pyruvate. Glycyl lysine isopeptide (Lys-Gly) (interchain with G-Cter in ubiquitin) cross-links involve residues Lys484, Lys505, and Lys520. Phosphothreonine is present on Thr522. A Phosphoserine modification is found at Ser526.

This sequence belongs to the TPP enzyme family. In terms of assembly, homotetramer. Mg(2+) serves as cofactor. Requires thiamine diphosphate as cofactor. In terms of processing, cleavage of N-terminal methionine and N-terminal acetylation by NAT1/ARD1.

It is found in the cytoplasm. It localises to the nucleus. The catalysed reaction is pyruvate + H(+) = acetaldehyde + CO2. It carries out the reaction 3-methyl-2-oxobutanoate + H(+) = 2-methylpropanal + CO2. The enzyme catalyses (S)-3-methyl-2-oxopentanoate + H(+) = 2-methylbutanal + CO2. It catalyses the reaction indole-3-pyruvate + H(+) = indole-3-acetaldehyde + CO2. The catalysed reaction is 3-phenylpyruvate + H(+) = 2-phenylacetaldehyde + CO2. It carries out the reaction 2-oxobutanoate + H(+) = propanal + CO2. The enzyme catalyses 2-oxopentanoate + H(+) = butanal + CO2. It catalyses the reaction 2 acetaldehyde = acetoin. The catalysed reaction is acetaldehyde + pyruvate + H(+) = acetoin + CO2. The protein operates within fermentation; ethanol fermentation. Its pathway is amino-acid degradation; Ehrlich pathway. Allosterically activated by its substrate, pyruvate. Its function is as follows. Major of three pyruvate decarboxylases (PDC1, PDC5, PDC6) implicated in the nonoxidative conversion of pyruvate to acetaldehyde and carbon dioxide during alcoholic fermentation. Most of the produced acetaldehyde is subsequently reduced to ethanol, but some is required for cytosolic acetyl-CoA production for biosynthetic pathways. The enzyme is also one of five 2-oxo acid decarboxylases (PDC1, PDC5, PDC6, ARO10, and THI3) able to decarboxylate more complex 2-oxo acids (alpha-ketoacids) than pyruvate, which seem mainly involved in amino acid catabolism. Here the enzyme catalyzes the decarboxylation of amino acids, which, in a first step, have been transaminated to the corresponding 2-oxo acids. In a third step, the resulting aldehydes are reduced to alcohols, collectively referred to as fusel oils or alcohols. Its preferred substrates are the transaminated amino acids derived from threonine (2-oxobutanoate), norvaline (2-oxopentanoate), valine (3-methyl-2-oxobutanoate, also alpha-keto-isovalerate), isoleucine ((3S)-3-methyl-2-oxopentanoate, also alpha-keto-beta-methylvalerate), phenylalanine (phenylpyruvate), and tryptophan (3-(indol-3-yl)pyruvate), whereas transaminated leucine is no substrate. In a side-reaction the carbanionic intermediate (or active aldehyde) generated by decarboxylation or by activation of an aldehyde can react with an aldehyde via condensation (or carboligation) yielding a 2-hydroxy ketone, collectively called acyloins. In Saccharomyces cerevisiae (strain ATCC 204508 / S288c) (Baker's yeast), this protein is Pyruvate decarboxylase isozyme 1.